Consider the following 268-residue polypeptide: Putative esterase/lipase 1 (268 aa).

H27 is a catalytic residue. S94 (charge relay system) is an active-site residue.

The protein belongs to the lipase/esterase LIP3/BchO family.

This is Putative esterase/lipase 1 from Mycoplasma genitalium (strain ATCC 33530 / DSM 19775 / NCTC 10195 / G37) (Mycoplasmoides genitalium).